The chain runs to 383 residues: Cytochrome b (383 aa).

The next 4 helical transmembrane spans lie at 32–52 (FGSL…FLAM), 76–98 (WLIR…CHIA), 113–133 (TWSI…LGYV), and 179–199 (FFSL…AHMI). The heme b site is built by His82 and His96. Heme b contacts are provided by His183 and His197. Residue His202 participates in a ubiquinone binding. 4 helical membrane passes run 225 to 245 (FIFK…IFVC), 289 to 309 (LLGV…PLTD), 321 to 341 (LMKL…WIGA), and 348 to 368 (YLEV…FIVP).

Belongs to the cytochrome b family. In terms of assembly, fungal cytochrome b-c1 complex contains 10 subunits; 3 respiratory subunits, 2 core proteins and 5 low-molecular weight proteins. Cytochrome b-c1 complex is a homodimer. Heme b is required as a cofactor.

It localises to the mitochondrion inner membrane. Its function is as follows. Component of the ubiquinol-cytochrome c reductase complex (complex III or cytochrome b-c1 complex) that is part of the mitochondrial respiratory chain. The b-c1 complex mediates electron transfer from ubiquinol to cytochrome c. Contributes to the generation of a proton gradient across the mitochondrial membrane that is then used for ATP synthesis. The chain is Cytochrome b (cob) from Schizophyllum commune (Split gill fungus).